The chain runs to 415 residues: Serine--tRNA ligase (415 aa).

L-serine is bound at residue 231 to 233 (TAE). 262 to 264 (RSE) contacts ATP. Glu-285 contributes to the L-serine binding site. An ATP-binding site is contributed by 349–352 (EISS). Ser-383 is an L-serine binding site.

Belongs to the class-II aminoacyl-tRNA synthetase family. Type-1 seryl-tRNA synthetase subfamily. Homodimer. The tRNA molecule binds across the dimer.

The protein localises to the cytoplasm. The catalysed reaction is tRNA(Ser) + L-serine + ATP = L-seryl-tRNA(Ser) + AMP + diphosphate + H(+). It carries out the reaction tRNA(Sec) + L-serine + ATP = L-seryl-tRNA(Sec) + AMP + diphosphate + H(+). Its pathway is aminoacyl-tRNA biosynthesis; selenocysteinyl-tRNA(Sec) biosynthesis; L-seryl-tRNA(Sec) from L-serine and tRNA(Sec): step 1/1. Functionally, catalyzes the attachment of serine to tRNA(Ser). Is also able to aminoacylate tRNA(Sec) with serine, to form the misacylated tRNA L-seryl-tRNA(Sec), which will be further converted into selenocysteinyl-tRNA(Sec). The sequence is that of Serine--tRNA ligase from Helicobacter pylori (strain J99 / ATCC 700824) (Campylobacter pylori J99).